Reading from the N-terminus, the 297-residue chain is MGEHEQVKPLETSSSKVKAKTIVMIPDSQKLLRCELESLKSQLQAQTKAFEFLNHSVTMLEKESCLQQIKIQQLEEVLSPTGRQGEKEEHKWGMEQGRQELYGALTQGLQGLEKTLRDSEEMQRARTTRCLQLLAQEIRDSKKFLWEELELVREEVTFIYQKLQAQEDEISENLVNIQKMQKTQVKCRKILTKMKQQGHETAACPETEEIPQGASGCWKDDLQKELSDIWSAVHVLQNSIDSLTLCSGACPKASSLRGHKGHQCLSPPLPSWDSDSDCDQDLSQPPFSKSGRSFPPA.

Residues 147-297 (EELELVREEV…SKSGRSFPPA (151 aa)) adopt a coiled-coil conformation. The tract at residues 256–297 (LRGHKGHQCLSPPLPSWDSDSDCDQDLSQPPFSKSGRSFPPA) is disordered.

Interacts with DYNLT2. Interacts with GGNBP1. Interacts with OSBP2.

In terms of biological role, functions during spermatid development; may participate in the centrosome reduction procedure of spermatids and is required for the formation of the connecting piece/sperm head-tail coupling apparatus (HTCA) and the correct and tight attachment of the flagellum to the nuclear envelope. The sequence is that of Coiled-coil domain-containing protein 159 (CCDC159) from Homo sapiens (Human).